The sequence spans 137 residues: UPF0275 protein PM0489 (137 aa).

This sequence belongs to the UPF0275 family.

The protein is UPF0275 protein PM0489 of Pasteurella multocida (strain Pm70).